Reading from the N-terminus, the 95-residue chain is Co-chaperonin GroES (95 aa).

The protein belongs to the GroES chaperonin family. In terms of assembly, heptamer of 7 subunits arranged in a ring. Interacts with the chaperonin GroEL.

Its subcellular location is the cytoplasm. Together with the chaperonin GroEL, plays an essential role in assisting protein folding. The GroEL-GroES system forms a nano-cage that allows encapsulation of the non-native substrate proteins and provides a physical environment optimized to promote and accelerate protein folding. GroES binds to the apical surface of the GroEL ring, thereby capping the opening of the GroEL channel. This is Co-chaperonin GroES from Desulfosudis oleivorans (strain DSM 6200 / JCM 39069 / Hxd3) (Desulfococcus oleovorans).